Consider the following 205-residue polypeptide: Holliday junction branch migration complex subunit RuvA (205 aa).

The interval 1-64 (MIGKLKGVID…EDQIKLFGFR (64 aa)) is domain I. A domain II region spans residues 65-143 (TDHEREWFRL…SFANVDPTVV (79 aa)). Positions 144–154 (HLAGDLDDQRA) are flexible linker. A domain III region spans residues 154 to 205 (APRPVRDAISALVNLGYGQPQATAAIAAASRGAGENAETAQLIRLGLKELSK).

The protein belongs to the RuvA family. Homotetramer. Forms an RuvA(8)-RuvB(12)-Holliday junction (HJ) complex. HJ DNA is sandwiched between 2 RuvA tetramers; dsDNA enters through RuvA and exits via RuvB. An RuvB hexamer assembles on each DNA strand where it exits the tetramer. Each RuvB hexamer is contacted by two RuvA subunits (via domain III) on 2 adjacent RuvB subunits; this complex drives branch migration. In the full resolvosome a probable DNA-RuvA(4)-RuvB(12)-RuvC(2) complex forms which resolves the HJ.

It localises to the cytoplasm. Functionally, the RuvA-RuvB-RuvC complex processes Holliday junction (HJ) DNA during genetic recombination and DNA repair, while the RuvA-RuvB complex plays an important role in the rescue of blocked DNA replication forks via replication fork reversal (RFR). RuvA specifically binds to HJ cruciform DNA, conferring on it an open structure. The RuvB hexamer acts as an ATP-dependent pump, pulling dsDNA into and through the RuvAB complex. HJ branch migration allows RuvC to scan DNA until it finds its consensus sequence, where it cleaves and resolves the cruciform DNA. The protein is Holliday junction branch migration complex subunit RuvA of Nitrobacter winogradskyi (strain ATCC 25391 / DSM 10237 / CIP 104748 / NCIMB 11846 / Nb-255).